A 414-amino-acid polypeptide reads, in one-letter code: MTIKTLALQCRDAAQVVSQLSSQAKCALLQAMAAALEADAGTILAANARDLEAARAKGTASAMLDRLALDDKRLAGIAAALREVALLPDPVGRITREDVRPNGIRVQKVRVPLGVIAMIYEARPNVTADAAALCIKAGNGVILRGGSEAIHSNTAIARALQRALREANVPEAALTLVEDLRRETMLELLQLNDIVDLAIPRGGEGLIRFVAEHARVPVIKHYKGVCHLFVDASAEMELALRLLIDGKATRPSACNSLETLLVHADIAERFLPLAAQALRERKVELRGDAATRAVLPEIAPASDDDYAAEFLDLILAMRVVADLDTALAHIRQYGSDHTEVIATQDPDNAERFVQSLRSAVVMVNASSRFSDGGELGLGAEIGISTTRLHSYGPMGLEALTVERFVVRGEGQVRH.

Belongs to the gamma-glutamyl phosphate reductase family.

It localises to the cytoplasm. It catalyses the reaction L-glutamate 5-semialdehyde + phosphate + NADP(+) = L-glutamyl 5-phosphate + NADPH + H(+). It participates in amino-acid biosynthesis; L-proline biosynthesis; L-glutamate 5-semialdehyde from L-glutamate: step 2/2. Its function is as follows. Catalyzes the NADPH-dependent reduction of L-glutamate 5-phosphate into L-glutamate 5-semialdehyde and phosphate. The product spontaneously undergoes cyclization to form 1-pyrroline-5-carboxylate. This chain is Gamma-glutamyl phosphate reductase, found in Xanthomonas oryzae pv. oryzae (strain KACC10331 / KXO85).